Reading from the N-terminus, the 252-residue chain is Phosphate import ATP-binding protein PstB (252 aa).

An ABC transporter domain is found at 6–247; it reads IDTRDVNFWY…PEKEATQNYI (242 aa). 38–45 provides a ligand contact to ATP; sequence GPSGCGKS.

It belongs to the ABC transporter superfamily. Phosphate importer (TC 3.A.1.7) family. As to quaternary structure, the complex is composed of two ATP-binding proteins (PstB), two transmembrane proteins (PstC and PstA) and a solute-binding protein (PstS).

The protein localises to the cell inner membrane. The enzyme catalyses phosphate(out) + ATP + H2O = ADP + 2 phosphate(in) + H(+). Functionally, part of the ABC transporter complex PstSACB involved in phosphate import. Responsible for energy coupling to the transport system. The protein is Phosphate import ATP-binding protein PstB of Bacteroides thetaiotaomicron (strain ATCC 29148 / DSM 2079 / JCM 5827 / CCUG 10774 / NCTC 10582 / VPI-5482 / E50).